The chain runs to 415 residues: Histidine--tRNA ligase (415 aa).

Belongs to the class-II aminoacyl-tRNA synthetase family. In terms of assembly, homodimer.

The protein localises to the cytoplasm. The catalysed reaction is tRNA(His) + L-histidine + ATP = L-histidyl-tRNA(His) + AMP + diphosphate + H(+). This is Histidine--tRNA ligase from Phytoplasma australiense.